A 327-amino-acid chain; its full sequence is Phenylalanine--tRNA ligase alpha subunit (327 aa).

Glu-252 contacts Mg(2+).

This sequence belongs to the class-II aminoacyl-tRNA synthetase family. Phe-tRNA synthetase alpha subunit type 1 subfamily. As to quaternary structure, tetramer of two alpha and two beta subunits. The cofactor is Mg(2+).

The protein resides in the cytoplasm. It carries out the reaction tRNA(Phe) + L-phenylalanine + ATP = L-phenylalanyl-tRNA(Phe) + AMP + diphosphate + H(+). The protein is Phenylalanine--tRNA ligase alpha subunit of Edwardsiella ictaluri (strain 93-146).